A 521-amino-acid chain; its full sequence is Maturase K (521 aa).

This sequence belongs to the intron maturase 2 family. MatK subfamily.

The protein resides in the plastid. The protein localises to the chloroplast. Usually encoded in the trnK tRNA gene intron. Probably assists in splicing its own and other chloroplast group II introns. The protein is Maturase K of Trillium erectum (Beth root).